A 736-amino-acid chain; its full sequence is MGARVKVVSEIEKIMRNIDQIRNIGIIAHVDHGKTTTSDSLLAAAGIISERIAGEALVLDYLNVEKQRGITVKSANVSLYHEYEGKPYVINLIDTPGHVDFSGKVTRSLRVLDGAIVVVDAVEGVMTQTETVIRQALEERVRPILFINKVDRLIKELKLPPEKIQQRFVEIIKEVNNLIDLYAEPEFRKKWKLDPNAGMVAFGSAKDKWGISVPQVKKKGITFREIIQAYEKGKEAVAELSKKMPLHETLLDMVIKFVPNPREAQRYRIPKIWKGDINSEIGQAMLNADPDGPLVFFINDVRIEKAGLVATGRVFSGTLRSGEEVYLLNAGKKSRLLQVSIYMGPFREVTKEIPAGNIGAVMGFEDVRAGETVVSLGYEENAAPFESLRYVSEPVVTIAVEPVKIQDLPKMIEALRKLTIEDPNLVVKINEETGEYLLSGMGPLHLEIALTMLREKFGVEVKASPPIVVYRETVRQQSRVFEGKSPNKHNKLYISVEPLNEETITLIQNGAVTEDQDPKDRARILADKAGWDYNEARKIWAIDENINVFVDKTAGVQYLREVKDTIIAGFRLALKEGPLAAEPVRGVKVVLHDAVIHEDPVHRGPGQLYPAVRNAIWAGILDGRPTLLEPLQKLDIRAPMEYLSNITAVLTRKRGRIINVETTGVMARIIAAIPVAESFDLAGELRSATAGRAFWGVEFYGWAPVPDQMLQDLIAKIRQRKGLPPSPPKIDDLIGP.

The tr-type G domain occupies 19–262 (DQIRNIGIIA…MVIKFVPNPR (244 aa)). GTP contacts are provided by residues 28 to 35 (AHVDHGKT), 94 to 98 (DTPGH), and 148 to 151 (NKVD). A Diphthamide modification is found at histidine 602.

The protein belongs to the TRAFAC class translation factor GTPase superfamily. Classic translation factor GTPase family. EF-G/EF-2 subfamily.

The protein resides in the cytoplasm. Its function is as follows. Catalyzes the GTP-dependent ribosomal translocation step during translation elongation. During this step, the ribosome changes from the pre-translocational (PRE) to the post-translocational (POST) state as the newly formed A-site-bound peptidyl-tRNA and P-site-bound deacylated tRNA move to the P and E sites, respectively. Catalyzes the coordinated movement of the two tRNA molecules, the mRNA and conformational changes in the ribosome. The polypeptide is Elongation factor 2 (fusA) (Aeropyrum pernix (strain ATCC 700893 / DSM 11879 / JCM 9820 / NBRC 100138 / K1)).